The sequence spans 463 residues: ATP-dependent rRNA helicase SPB4 (463 aa).

The short motif at 4–32 is the Q motif element; that stretch reads KGIEDVAMNGRLKKEIEENGFGKMTEVQL. One can recognise a Helicase ATP-binding domain in the interval 35 to 205; it reads IPEVLKGKDV…RVFLRNPVSI (171 aa). 48–55 contacts ATP; it reads SPTGTGKT. A DEAD box motif is present at residues 153 to 156; it reads DEAD. Residues 226-382 form the Helicase C-terminal domain; sequence KLLVLMDIVT…DIKSMISPEL (157 aa). A disordered region spans residues 444–463; that stretch reads RDGKKRALPKKKYRKKRAIK. Residues 446–463 show a composition bias toward basic residues; it reads GKKRALPKKKYRKKRAIK.

It belongs to the DEAD box helicase family. DDX55/SPB4 subfamily. In terms of assembly, component of pre-60S ribosomal complexes.

It is found in the nucleus. It localises to the nucleolus. The catalysed reaction is ATP + H2O = ADP + phosphate + H(+). Functionally, ATP-binding RNA helicase involved in the biogenesis of 60S ribosomal subunits. Binds 90S pre-ribosomal particles and dissociates from pre-60S ribosomal particles after processing of 27SB pre-rRNA. Required for the normal formation of 18S rRNA through the processing of pre-rRNAs at sites A0, A1 and A2, and the normal formation of 25S and 5.8S rRNAs through the processing of pre-rRNAs at sites C1 and C2. The sequence is that of ATP-dependent rRNA helicase SPB4 from Encephalitozoon cuniculi (strain GB-M1) (Microsporidian parasite).